A 259-amino-acid polypeptide reads, in one-letter code: Tryptophan synthase alpha chain (259 aa).

Active-site proton acceptor residues include E35 and D46.

Belongs to the TrpA family. In terms of assembly, tetramer of two alpha and two beta chains.

It catalyses the reaction (1S,2R)-1-C-(indol-3-yl)glycerol 3-phosphate + L-serine = D-glyceraldehyde 3-phosphate + L-tryptophan + H2O. The protein operates within amino-acid biosynthesis; L-tryptophan biosynthesis; L-tryptophan from chorismate: step 5/5. Its function is as follows. The alpha subunit is responsible for the aldol cleavage of indoleglycerol phosphate to indole and glyceraldehyde 3-phosphate. This chain is Tryptophan synthase alpha chain, found in Methanococcus vannielii (strain ATCC 35089 / DSM 1224 / JCM 13029 / OCM 148 / SB).